The primary structure comprises 127 residues: UPF0325 protein VP2321 (127 aa).

Belongs to the UPF0325 family.

In Vibrio parahaemolyticus serotype O3:K6 (strain RIMD 2210633), this protein is UPF0325 protein VP2321.